The following is a 526-amino-acid chain: MAIHAAYIFIAATLIALYVARRMREQHARQKLARDQGCEPLTTAINKLPYGLDRKWQIVTHRGNILDDLITTRFAELGCYIYTDNQWGSPPIICAEPATMKAVLSTKFRDWDMDSNRYPALGPWLGRGVLVSSHQGKGSLWATARALLRPMFANTATYNHALIEPSVQEFLSILGHLNQAGAPDKDLLPFIRRLNVDIITTVFCGGSINEQQSGLAIAVGADAKHRKPVLEEAFDTIEPIAGLRLQTGSMYWLFTSKPFRDGCETFTGLADGWINRALSKRDEKPDLSQDEGAAAREKNFTEELVSSTDDRELLRDILVQLLFAGIDTSTSMLSFALVELGRHPSAWARLRAELAAHNMLSGGPETITAAQLKECAFLQNIIKETLRLYPPVPINSREAIRDTVLPSGGGADGSKPVFVPKGTSLKYSPYVMHRREDLYGPDALLWNPDRWIGRAPGWDYLPFNGGPRVCIGQKFALSSSAYVLARLAQQFDTCTALPTTGPIDSKLGAVLVPKAGVPVSLTNSTT.

The helical transmembrane segment at 2-20 (AIHAAYIFIAATLIALYVA) threads the bilayer. Cysteine 470 contributes to the heme binding site.

The protein belongs to the cytochrome P450 family. It depends on heme as a cofactor.

It localises to the membrane. The enzyme catalyses cordypyrone A + reduced [NADPH--hemoprotein reductase] + O2 = cordypyrone B + oxidized [NADPH--hemoprotein reductase] + H2O + H(+). Its pathway is secondary metabolite biosynthesis. In terms of biological role, cytochrome P450 monooxygenase; part of the gene cluster that mediates the biosynthesis of cordypyrones A and B, 2 pyrones that show modest activities against pathogenic bacteria including methicillin-resistant Staphylococcus aureus (MRSA), Mycobacterium tuberculosis and Bacillus cereus. The HR-PKS milA catalyzes the formation of cordypyrones A via condensation of one acetate with 10 malonate units. Since milA lacks an enoyl reductase domain, the 2 beta-keto processing domains DH and KR of milA collaborate with the trans-enoyl reductase milB to catalyze the different levels of reduction. The cytochrome P450 monooxygenase milC then hydroxylates the C-22 of cordypyrones A to yield cordypyrones B. The sequence is that of Cytochrome P450 monooxygenase milC from Cordyceps militaris (strain CM01) (Caterpillar fungus).